The chain runs to 73 residues: Toxin Td9 (73 aa).

The first 7 residues, 1-7, serve as a signal peptide directing secretion; it reads IGMVAEC. In terms of domain architecture, LCN-type CS-alpha/beta spans 8–70; that stretch reads KDGYLVGDDG…IWNSATNSCG (63 aa). 4 disulfide bridges follow: Cys18/Cys69, Cys22/Cys44, Cys30/Cys50, and Cys34/Cys52. Residue Lys71 is modified to Lysine amide.

It belongs to the long (4 C-C) scorpion toxin superfamily. Sodium channel inhibitor family. Beta subfamily. Expressed by the venom gland.

It is found in the secreted. Its function is as follows. Beta toxins bind voltage-independently at site-4 of sodium channels (Nav) and shift the voltage of activation toward more negative potentials thereby affecting sodium channel activation and promoting spontaneous and repetitive firing. The protein is Toxin Td9 of Tityus discrepans (Venezuelan scorpion).